Here is a 410-residue protein sequence, read N- to C-terminus: Homeobox protein Hox-A3a (410 aa).

The interval 79–126 (VTDTSDNKQPPTAPSGPSSPSSLNQIPNIDSAAKNPVHVSPTPSTRKH) is disordered. The short motif at 127–132 (IFPWMK) is the Antp-type hexapeptide element. Residues 163 to 222 (SKRARTAYTSAQLVELEKEFHFNRYLCRPRRVEMANLLNLTERQIKIWFQNRRMKYKKDQ) constitute a DNA-binding region (homeobox). The tract at residues 222-249 (QKGLGMMPSPGAQSPHSPVSLSSGGGGG) is disordered.

This sequence belongs to the Antp homeobox family.

It localises to the nucleus. Sequence-specific transcription factor which is part of a developmental regulatory system that provides cells with specific positional identities on the anterior-posterior axis. In Danio rerio (Zebrafish), this protein is Homeobox protein Hox-A3a (hoxa3a).